The sequence spans 560 residues: Membrane protein insertase YidC (560 aa).

Residues 1–21 traverse the membrane as a helical segment; sequence MDIKRTILIAALAVVSYVMVL. A disordered region spans residues 42-66; it reads VAPGLPDGVPAGNNGASADVPSANA. 5 helical membrane passes run 341–361, 367–387, 437–457, 468–488, and 515–535; these read LELT…FWLL, LLGN…GLFF, LGGC…YWVL, WILW…PIIM, and PIIF…YWVV.

This sequence belongs to the OXA1/ALB3/YidC family. Type 1 subfamily. In terms of assembly, interacts with the Sec translocase complex via SecD. Specifically interacts with transmembrane segments of nascent integral membrane proteins during membrane integration.

The protein localises to the cell inner membrane. Functionally, required for the insertion and/or proper folding and/or complex formation of integral membrane proteins into the membrane. Involved in integration of membrane proteins that insert both dependently and independently of the Sec translocase complex, as well as at least some lipoproteins. Aids folding of multispanning membrane proteins. This chain is Membrane protein insertase YidC, found in Pseudomonas putida (strain ATCC 700007 / DSM 6899 / JCM 31910 / BCRC 17059 / LMG 24140 / F1).